The chain runs to 132 residues: Extracellular small neutral protease (132 aa).

Aspartate 76 and threonine 78 together coordinate Ca(2+). Histidine 83 is a binding site for Zn(2+). Glutamate 84 is an active-site residue. 2 residues coordinate Zn(2+): histidine 87 and aspartate 93. Residues cysteine 99 and cysteine 112 are joined by a disulfide bond.

This sequence belongs to the peptidase M7 family. The cofactor is Ca(2+). It depends on Zn(2+) as a cofactor.

The protein resides in the secreted. It catalyses the reaction Hydrolyzes proteins with a preference for Tyr or Phe in the P1' position. Has no action on amino-acid p-nitroanilides.. In terms of biological role, specifically hydrolyzes the peptide bond at the imino side of aromatic residues. This chain is Extracellular small neutral protease (snpA), found in Streptomyces caespitosus.